We begin with the raw amino-acid sequence, 478 residues long: Crt homolog 3 (478 aa).

Residues 1 to 30 (MGSDERKPLLSINDGDDDFNHQDVSTKTPP) form a disordered region. At 1-52 (MGSDERKPLLSINDGDDDFNHQDVSTKTPPIKKESLSNKFKSFLKKSMTKET) the chain is on the cytoplasmic side. A helical membrane pass occupies residues 53–73 (LPILIYVLLYIISGVINVVLL). Over 74–83 (KKLMIKFVNY) the chain is Vacuolar. Residues 84 to 104 (GFFLSQITNYGYLPIFLVAMW) traverse the membrane as a helical segment. Topologically, residues 105-124 (YKMYCTSDVPKETRNFPQYK) are cytoplasmic. The chain crosses the membrane as a helical span at residues 125–145 (FVIMGLLDAINGFFVVIGGVS). Topologically, residues 146–149 (TSGP) are vacuolar. Residues 150 to 170 (LQQLLNQAIIPFTMIASFIFL) form a helical membrane-spanning segment. Topologically, residues 171 to 178 (RERYSLFQ) are cytoplasmic. A helical transmembrane segment spans residues 179 to 199 (LGGAAVILGGVIVSLIPSLVG). Residues 200-205 (GSSGGN) are Vacuolar-facing. Residues 206–226 (ILFYNFFYLISVIPGALSNVY) form a helical membrane-spanning segment. The Cytoplasmic segment spans residues 227–237 (KDIAFQSIDMD). A helical membrane pass occupies residues 238–258 (VWYLQFWDCLYQSLFGSILFP). Residues 259 to 322 (VNNWLPPPAT…FVCDDCHNTW (64 aa)) lie on the Vacuolar side of the membrane. Asn-296 carries N-linked (GlcNAc...) asparagine glycosylation. Residues 323 to 343 (IIVLIYMTVNIAYNIFILLVL) form a helical membrane-spanning segment. The Cytoplasmic segment spans residues 344-352 (KHAGATVYS). Residues 353-373 (IANTVILPLTNIFFSIHFIMG) form a helical membrane-spanning segment. The Vacuolar portion of the chain corresponds to 374-376 (AAT). A helical membrane pass occupies residues 377–397 (TPFSALSVAGLLLILFGLGGY). Topologically, residues 398–478 (RIGSMIKKPP…RYRATNIINN (81 aa)) are cytoplasmic. Residues 404-446 (KKPPPDSKKDSEQQGGEGGAGDGDSSDNKNNLGDSAEIPQQIQ) form a disordered region. The span at 406–415 (PPPDSKKDSE) shows a compositional bias: basic and acidic residues.

The protein belongs to the CRT-like transporter family.

It is found in the vacuole membrane. In terms of biological role, nutrient transporter. Involved in maintaining the osmotic homeostasis of the digestive vacuole. In Dictyostelium discoideum (Social amoeba), this protein is Crt homolog 3 (crtp3).